The primary structure comprises 318 residues: NADH-ubiquinone oxidoreductase chain 1 (318 aa).

The next 8 membrane-spanning stretches (helical) occupy residues 3–23 (LINVLSLIIPILLAVAFLTLL), 69–89 (LMFTLAPTLALTLALSLWIPI), 100–120 (LGVLFILAMSSLAVYSILWSG), 135–155 (AVAQTISYEVTLAIILLSIMM), 171–191 (HMWLIFPLWPLAMMWFISTLA), 223–243 (FFLAEYANIIMMNALTAILFF), 253–273 (ELHTLNLITKTLILTMMFLWV), and 293–313 (FLPLTLALCMLHVSAPATFAG).

The protein belongs to the complex I subunit 1 family.

The protein localises to the mitochondrion inner membrane. It carries out the reaction a ubiquinone + NADH + 5 H(+)(in) = a ubiquinol + NAD(+) + 4 H(+)(out). Core subunit of the mitochondrial membrane respiratory chain NADH dehydrogenase (Complex I) that is believed to belong to the minimal assembly required for catalysis. Complex I functions in the transfer of electrons from NADH to the respiratory chain. The immediate electron acceptor for the enzyme is believed to be ubiquinone. The sequence is that of NADH-ubiquinone oxidoreductase chain 1 (MT-ND1) from Dasypus novemcinctus (Nine-banded armadillo).